The following is a 250-amino-acid chain: Solute carrier family 66 member 2 (250 aa).

The 67-residue stretch at 14–80 (RMLVSWGASC…HHFESPLLWQ (67 aa)) folds into the PQ-loop 1 domain. 6 helical membrane-spanning segments follow: residues 15 to 35 (MLVS…PYIP), 49 to 69 (FSIY…LFWF), 72 to 92 (HFES…LLML), 118 to 138 (FFWH…FTGV), 151 to 173 (LFVE…PQLY), and 212 to 232 (FSIC…QVYL). Residues 149–215 (SPLFVEILGF…NQAPFQFSIC (67 aa)) enclose the PQ-loop 2 domain.

The protein localises to the membrane. This is Solute carrier family 66 member 2 (slc66a2) from Xenopus laevis (African clawed frog).